The chain runs to 233 residues: Large ribosomal subunit protein uL1 (233 aa).

The protein belongs to the universal ribosomal protein uL1 family. As to quaternary structure, part of the 50S ribosomal subunit.

Binds directly to 23S rRNA. The L1 stalk is quite mobile in the ribosome, and is involved in E site tRNA release. Functionally, protein L1 is also a translational repressor protein, it controls the translation of the L11 operon by binding to its mRNA. This chain is Large ribosomal subunit protein uL1, found in Thermotoga petrophila (strain ATCC BAA-488 / DSM 13995 / JCM 10881 / RKU-1).